Reading from the N-terminus, the 178-residue chain is Large ribosomal subunit protein uL16 (178 aa).

This sequence belongs to the universal ribosomal protein uL16 family.

This Saccharolobus islandicus (strain Y.N.15.51 / Yellowstone #2) (Sulfolobus islandicus) protein is Large ribosomal subunit protein uL16.